We begin with the raw amino-acid sequence, 626 residues long: Biosynthetic arginine decarboxylase (626 aa).

Lysine 99 bears the N6-(pyridoxal phosphate)lysine mark. Residue 279–289 (VDVGGGLGVDY) participates in substrate binding.

This sequence belongs to the Orn/Lys/Arg decarboxylase class-II family. SpeA subfamily. Mg(2+) serves as cofactor. It depends on pyridoxal 5'-phosphate as a cofactor.

The enzyme catalyses L-arginine + H(+) = agmatine + CO2. It participates in amine and polyamine biosynthesis; agmatine biosynthesis; agmatine from L-arginine: step 1/1. Its function is as follows. Catalyzes the biosynthesis of agmatine from arginine. In Chromobacterium violaceum (strain ATCC 12472 / DSM 30191 / JCM 1249 / CCUG 213 / NBRC 12614 / NCIMB 9131 / NCTC 9757 / MK), this protein is Biosynthetic arginine decarboxylase.